The sequence spans 270 residues: Very long chain fatty acid elongase 3 (270 aa).

Asn6 carries an N-linked (GlcNAc...) asparagine glycan. A run of 2 helical transmembrane segments spans residues 29-49 and 63-83; these read FFEE…VLIA and LQGP…LGAV. The N-linked (GlcNAc...) asparagine glycan is linked to Asn110. 5 helical membrane-spanning segments follow: residues 115 to 135, 140 to 160, 164 to 184, 198 to 218, and 235 to 255; these read FWSW…AFII, PLIF…SFGY, VPAG…MYTY, LPML…IVSI, and HLFW…HFFC. A Di-lysine motif motif is present at residues 266 to 270; sequence KTKSQ.

The protein belongs to the ELO family. ELOVL3 subfamily. Interacts with TECR. Post-translationally, N-Glycosylated. As to expression, testis.

It is found in the endoplasmic reticulum membrane. It carries out the reaction a very-long-chain acyl-CoA + malonyl-CoA + H(+) = a very-long-chain 3-oxoacyl-CoA + CO2 + CoA. The enzyme catalyses eicosanoyl-CoA + malonyl-CoA + H(+) = 3-oxodocosanoyl-CoA + CO2 + CoA. It catalyses the reaction hexadecanoyl-CoA + malonyl-CoA + H(+) = 3-oxooctadecanoyl-CoA + CO2 + CoA. The catalysed reaction is octadecanoyl-CoA + malonyl-CoA + H(+) = 3-oxoeicosanoyl-CoA + CO2 + CoA. It carries out the reaction (9Z)-octadecenoyl-CoA + malonyl-CoA + H(+) = 3-oxo-(11Z)-eicosenoyl-CoA + CO2 + CoA. The enzyme catalyses (9Z,12Z)-octadecadienoyl-CoA + malonyl-CoA + H(+) = (11Z,14Z)-3-oxoicosa-11,14-dienoyl-CoA + CO2 + CoA. It catalyses the reaction (9Z,12Z,15Z)-octadecatrienoyl-CoA + malonyl-CoA + H(+) = (11Z,14Z,17Z)-3-oxoeicosatrienoyl-CoA + CO2 + CoA. The catalysed reaction is docosanoyl-CoA + malonyl-CoA + H(+) = 3-oxotetracosanoyl-CoA + CO2 + CoA. It carries out the reaction tetradecanoyl-CoA + malonyl-CoA + H(+) = 3-oxohexadecanoyl-CoA + CO2 + CoA. The protein operates within lipid metabolism; polyunsaturated fatty acid biosynthesis. Catalyzes the first and rate-limiting reaction of the four reactions that constitute the long-chain fatty acids elongation cycle. This endoplasmic reticulum-bound enzymatic process allows the addition of 2 carbons to the chain of long- and very long-chain fatty acids (VLCFAs) per cycle. Condensing enzyme that exhibits activity toward saturated and unsaturated acyl-CoA substrates with higher activity toward C18 acyl-CoAs, especially C18:0 acyl-CoAs. May participate in the production of saturated and monounsaturated VLCFAs of different chain lengths that are involved in multiple biological processes as precursors of membrane lipids and lipid mediators. The protein is Very long chain fatty acid elongase 3 of Homo sapiens (Human).